A 514-amino-acid polypeptide reads, in one-letter code: Na(+)/H(+) antiporter NhaB (514 aa).

Transmembrane regions (helical) follow at residues Leu23 to Ala43, Pro63 to Ala83, Leu97 to Phe117, Leu120 to Phe140, Phe144 to Ile164, Leu202 to Pro222, Phe238 to Met258, Ala303 to Ile323, Leu357 to Ile377, Leu391 to Ile411, Ala447 to Ile467, and Val475 to Phe495.

It belongs to the NhaB Na(+)/H(+) (TC 2.A.34) antiporter family.

It localises to the cell inner membrane. The catalysed reaction is 2 Na(+)(in) + 3 H(+)(out) = 2 Na(+)(out) + 3 H(+)(in). Functionally, na(+)/H(+) antiporter that extrudes sodium in exchange for external protons. The chain is Na(+)/H(+) antiporter NhaB from Salmonella newport (strain SL254).